A 65-amino-acid chain; its full sequence is Large ribosomal subunit protein bL33c (65 aa).

Belongs to the bacterial ribosomal protein bL33 family.

The protein resides in the plastid. Its subcellular location is the chloroplast. The sequence is that of Large ribosomal subunit protein bL33c from Pyropia yezoensis (Susabi-nori).